We begin with the raw amino-acid sequence, 116 residues long: Non-specific lipid-transfer protein (116 aa).

The signal sequence occupies residues 1 to 23; the sequence is MASMKVVCVALIMCIVIAPMAES. Cystine bridges form between Cys27/Cys74, Cys37/Cys51, Cys52/Cys97, and Cys72/Cys111.

The protein belongs to the plant LTP family.

Plant non-specific lipid-transfer proteins transfer phospholipids as well as galactolipids across membranes. May play a role in wax or cutin deposition in the cell walls of expanding epidermal cells and certain secretory tissues. In Cicer arietinum (Chickpea), this protein is Non-specific lipid-transfer protein.